The following is a 49-amino-acid chain: Defensin Tk-AMP-D2 (49 aa).

Cystine bridges form between Cys3–Cys49, Cys14–Cys34, Cys20–Cys43, and Cys24–Cys45.

In terms of biological role, plant defense peptide. This Triticum kiharae (Wheat) protein is Defensin Tk-AMP-D2.